A 294-amino-acid chain; its full sequence is Gap junction delta-3 protein (294 aa).

Residues Met1–Leu24 are Cytoplasmic-facing. The chain crosses the membrane as a helical span at residues Trp25–Phe45. Topologically, residues Glu46–Arg76 are extracellular. A helical membrane pass occupies residues Phe77–Met97. Over His98–Tyr136 the chain is Cytoplasmic. Residues Leu137–Leu157 traverse the membrane as a helical segment. Residues Tyr158–Thr188 are Extracellular-facing. A helical transmembrane segment spans residues Val189 to Leu209. Over Gly210 to Ile294 the chain is Cytoplasmic. Residues Glu233–Ile294 are disordered. Pro residues predominate over residues Leu238–Leu250.

It belongs to the connexin family. Delta-type subfamily. As to quaternary structure, a connexon is composed of a hexamer of connexins. Interacts with TJP1. In terms of tissue distribution, expressed in vascular smooth muscle cells. Found in heart, colon, and artery (at protein level). Found in cerebral cortex, heart, liver, lung, kidney, spleen and testis.

The protein localises to the cell membrane. Its subcellular location is the cell junction. It is found in the gap junction. Functionally, one gap junction consists of a cluster of closely packed pairs of transmembrane channels, the connexons, through which materials of low MW diffuse from one cell to a neighboring cell. The chain is Gap junction delta-3 protein (GJD3) from Homo sapiens (Human).